We begin with the raw amino-acid sequence, 103 residues long: Co-chaperonin GroES (103 aa).

Belongs to the GroES chaperonin family. Heptamer of 7 subunits arranged in a ring. Interacts with the chaperonin GroEL.

Its subcellular location is the cytoplasm. In terms of biological role, together with the chaperonin GroEL, plays an essential role in assisting protein folding. The GroEL-GroES system forms a nano-cage that allows encapsulation of the non-native substrate proteins and provides a physical environment optimized to promote and accelerate protein folding. GroES binds to the apical surface of the GroEL ring, thereby capping the opening of the GroEL channel. This Prochlorococcus marinus (strain MIT 9515) protein is Co-chaperonin GroES.